Here is a 224-residue protein sequence, read N- to C-terminus: EEF1A lysine methyltransferase 3 (224 aa).

S-adenosyl-L-methionine-binding positions include W58, 84-86 (GAG), D105, W134, and A151.

This sequence belongs to the methyltransferase superfamily. METTL21 family.

It localises to the cytoplasm. Its subcellular location is the cytoskeleton. The protein resides in the microtubule organizing center. The protein localises to the centrosome. The enzyme catalyses L-lysyl-[protein] + 3 S-adenosyl-L-methionine = N(6),N(6),N(6)-trimethyl-L-lysyl-[protein] + 3 S-adenosyl-L-homocysteine + 3 H(+). The catalysed reaction is L-lysyl-[protein] + S-adenosyl-L-methionine = N(6)-methyl-L-lysyl-[protein] + S-adenosyl-L-homocysteine + H(+). It catalyses the reaction N(6)-methyl-L-lysyl-[protein] + S-adenosyl-L-methionine = N(6),N(6)-dimethyl-L-lysyl-[protein] + S-adenosyl-L-homocysteine + H(+). It carries out the reaction N(6),N(6)-dimethyl-L-lysyl-[protein] + S-adenosyl-L-methionine = N(6),N(6),N(6)-trimethyl-L-lysyl-[protein] + S-adenosyl-L-homocysteine + H(+). In terms of biological role, protein-lysine methyltransferase that selectively mono-, di- and trimethylates 'Lys-165' of the translation elongation factors EEF1A1 and EEF1A2 in an aminoacyl-tRNA and GTP-dependent manner. EEF1A1 methylation by EEF1AKMT3 is dynamic as well as inducible by stress conditions, such as ER-stress, and plays a regulatory role on mRNA translation. The protein is EEF1A lysine methyltransferase 3 of Xenopus tropicalis (Western clawed frog).